The following is a 421-amino-acid chain: 3-isopropylmalate dehydratase large subunit (421 aa).

[4Fe-4S] cluster-binding residues include Cys302, Cys362, and Cys365.

Belongs to the aconitase/IPM isomerase family. LeuC type 2 subfamily. As to quaternary structure, heterodimer of LeuC and LeuD. It depends on [4Fe-4S] cluster as a cofactor.

The catalysed reaction is (2R,3S)-3-isopropylmalate = (2S)-2-isopropylmalate. It participates in amino-acid biosynthesis; L-leucine biosynthesis; L-leucine from 3-methyl-2-oxobutanoate: step 2/4. Functionally, catalyzes the isomerization between 2-isopropylmalate and 3-isopropylmalate, via the formation of 2-isopropylmaleate. The sequence is that of 3-isopropylmalate dehydratase large subunit from Campylobacter concisus (strain 13826).